A 256-amino-acid chain; its full sequence is Low molecular mass lipoprotein PBMHP-6 (256 aa).

A signal peptide spans Met-1–Ala-19.

Belongs to the 30 kDa lipoprotein family.

The protein localises to the secreted. This chain is Low molecular mass lipoprotein PBMHP-6, found in Bombyx mori (Silk moth).